Here is a 361-residue protein sequence, read N- to C-terminus: Chorismate synthase (361 aa).

Residues Arg-48 and Arg-54 each contribute to the NADP(+) site. FMN is bound by residues 125–127 (RSS), 238–239 (NA), Gly-278, 293–297 (KPTSS), and Arg-319.

The protein belongs to the chorismate synthase family. Homotetramer. FMNH2 is required as a cofactor.

The enzyme catalyses 5-O-(1-carboxyvinyl)-3-phosphoshikimate = chorismate + phosphate. It functions in the pathway metabolic intermediate biosynthesis; chorismate biosynthesis; chorismate from D-erythrose 4-phosphate and phosphoenolpyruvate: step 7/7. In terms of biological role, catalyzes the anti-1,4-elimination of the C-3 phosphate and the C-6 proR hydrogen from 5-enolpyruvylshikimate-3-phosphate (EPSP) to yield chorismate, which is the branch point compound that serves as the starting substrate for the three terminal pathways of aromatic amino acid biosynthesis. This reaction introduces a second double bond into the aromatic ring system. In Shigella flexneri serotype 5b (strain 8401), this protein is Chorismate synthase.